A 244-amino-acid chain; its full sequence is Deoxynucleotide monophosphate kinase (244 aa).

K10 is a dGMP binding site. Positions 11, 13, 15, and 16 each coordinate ATP. The dGMP site is built by I36, K37, R70, R137, G144, T145, V149, W157, D180, R182, Q183, E186, and T213.

The protein belongs to the dNMP kinase family. As to quaternary structure, homodimer. Mg(2+) serves as cofactor.

It catalyses the reaction dTMP + ATP = dTDP + ADP. It carries out the reaction dGMP + ATP = dGDP + ADP. The catalysed reaction is 5-hydroxymethyl-dCMP + ATP = 5-hydroxymethyl-dCDP + ADP. Allows the synthesis of deoxyribonucleoside triphosphates necessary for the rapid viral DNA replication. Phosphorylates dGMP, dTMP and 5-hydroxymethyl-dCMP (hmdCMP) while excluding dCMP and dAMP. The phosphorylation of 5-hydroxymethyl-dCMP represents the first step in the replacement of cytosine by hydroxymethylcytosine in new viral DNA genomes. This chain is Deoxynucleotide monophosphate kinase (1), found in Escherichia phage RB69 (Bacteriophage RB69).